Reading from the N-terminus, the 30-residue chain is Putative UPF0377 protein YNR075C-A (30 aa).

Belongs to the UPF0377 family.

The sequence is that of Putative UPF0377 protein YNR075C-A from Saccharomyces cerevisiae (strain ATCC 204508 / S288c) (Baker's yeast).